The sequence spans 158 residues: Endoribonuclease YbeY (158 aa).

Zn(2+) is bound by residues H121, H125, and H131.

The protein belongs to the endoribonuclease YbeY family. Zn(2+) is required as a cofactor.

It is found in the cytoplasm. In terms of biological role, single strand-specific metallo-endoribonuclease involved in late-stage 70S ribosome quality control and in maturation of the 3' terminus of the 16S rRNA. The chain is Endoribonuclease YbeY from Exiguobacterium sp. (strain ATCC BAA-1283 / AT1b).